We begin with the raw amino-acid sequence, 501 residues long: Dihydrolipoyl dehydrogenase, mitochondrial (501 aa).

A mitochondrion-targeting transit peptide spans 1-31 (MAMANLARRKGYSLLSSETLRYSFSLRSRAF). FAD-binding positions include 67–76 (EKRGALGGTC), K85, G149, and 178–180 (TGS). C76 and C81 are oxidised to a cystine. Residues 215–222 (GAGYIGLE), E238, V272, and G307 contribute to the NAD(+) site. Residues D348 and 354-357 (MLAH) each bind FAD. Residue H480 is the Proton acceptor of the active site.

The protein belongs to the class-I pyridine nucleotide-disulfide oxidoreductase family. In terms of assembly, homodimer. The cofactor is FAD.

It localises to the mitochondrion matrix. It catalyses the reaction N(6)-[(R)-dihydrolipoyl]-L-lysyl-[protein] + NAD(+) = N(6)-[(R)-lipoyl]-L-lysyl-[protein] + NADH + H(+). Functionally, lipoamide dehydrogenase is a component of the glycine cleavage system as well as of the alpha-ketoacid dehydrogenase complexes. The pyruvate dehydrogenase complex contains multiple copies of three enzymatic components: pyruvate dehydrogenase (E1), dihydrolipoamide acetyltransferase (E2) and lipoamide dehydrogenase (E3). The chain is Dihydrolipoyl dehydrogenase, mitochondrial (LPD) from Pisum sativum (Garden pea).